A 932-amino-acid chain; its full sequence is 3-hydroxy-3-methylglutaryl-coenzyme A reductase (932 aa).

Transmembrane regions (helical) follow at residues 20–40, 59–79, 92–112, 113–133, 162–182, and 193–213; these read VIVC…FTGL, LSSD…YLYL, ILGI…SAVI, HLFG…LLLI, MAIL…VISI, and VFCC…MTFF. An N-linked (GlcNAc...) asparagine glycan is attached at asparagine 279. A helical transmembrane segment spans residues 322–342; sequence ILTAILATVLASHYIFFSDLA. Positions 343 to 467 are linker; the sequence is TYPEKRVSIM…APRPMPELLE (125 aa). Positions 357–367 are enriched in basic and acidic residues; that stretch reads VVNPGSDHEDA. Residues 357–442 are disordered; the sequence is VVNPGSDHED…SGSEDEEEEV (86 aa). Residues 374 to 403 show a composition bias toward polar residues; that stretch reads GTLSSSPSTSDVRVIESMTSRTQACQTDPV. The span at 406 to 421 shows a compositional bias: low complexity; it reads SPRNSRSSSPVSSHSV. Positions 468–932 are catalytic; it reads ILNVGKGPNA…APGTCTANAS (465 aa). Catalysis depends on charge relay system residues glutamate 575, lysine 707, and aspartate 783. N-linked (GlcNAc...) asparagine glycosylation occurs at asparagine 850. The active-site Proton donor is the histidine 882. An N-linked (GlcNAc...) asparagine glycan is attached at asparagine 886. Position 888 is a phosphoserine; by AMPK (serine 888).

This sequence belongs to the HMG-CoA reductase family.

The protein localises to the endoplasmic reticulum membrane. It catalyses the reaction (R)-mevalonate + 2 NADP(+) + CoA = (3S)-3-hydroxy-3-methylglutaryl-CoA + 2 NADPH + 2 H(+). The protein operates within metabolic intermediate biosynthesis; (R)-mevalonate biosynthesis; (R)-mevalonate from acetyl-CoA: step 3/3. In terms of biological role, this transmembrane glycoprotein is involved in the control of cholesterol biosynthesis. It is the rate-limiting enzyme of sterol biosynthesis. The sequence is that of 3-hydroxy-3-methylglutaryl-coenzyme A reductase (HMGCR) from Strongylocentrotus purpuratus (Purple sea urchin).